A 602-amino-acid chain; its full sequence is DNA ligase (602 aa).

Glutamate 262 contributes to the ATP binding site. The active-site N6-AMP-lysine intermediate is lysine 264. 6 residues coordinate ATP: arginine 269, arginine 284, glutamate 314, phenylalanine 354, arginine 431, and lysine 437.

The protein belongs to the ATP-dependent DNA ligase family. In terms of assembly, monomer. The cofactor is Mg(2+). It depends on Mn(2+) as a cofactor.

It carries out the reaction ATP + (deoxyribonucleotide)n-3'-hydroxyl + 5'-phospho-(deoxyribonucleotide)m = (deoxyribonucleotide)n+m + AMP + diphosphate.. The catalysed reaction is ADP + (deoxyribonucleotide)n-3'-hydroxyl + 5'-phospho-(deoxyribonucleotide)m = (deoxyribonucleotide)n+m + AMP + phosphate.. The enzyme catalyses GTP + (deoxyribonucleotide)n-3'-hydroxyl + 5'-phospho-(deoxyribonucleotide)m = (deoxyribonucleotide)n+m + GMP + diphosphate.. With respect to regulation, inhibited in the presence of 100 mM KCl, NaCl or NH(4)Cl. In terms of biological role, DNA ligase that seals nicks in double-stranded DNA during DNA replication, DNA recombination and DNA repair. Can also use ADP, but not NAD(+). This is DNA ligase from Aeropyrum pernix (strain ATCC 700893 / DSM 11879 / JCM 9820 / NBRC 100138 / K1).